A 752-amino-acid polypeptide reads, in one-letter code: Polyribonucleotide nucleotidyltransferase (752 aa).

Asp-519 and Asp-525 together coordinate Mg(2+). A KH domain is found at 585–644; sequence PRVIAVKIPVDKIGEVIGPKGKMINQIQEDTGADISIEDDGTVYIGATNGPSADAARSAI. The 73-residue stretch at 656–728 folds into the S1 motif domain; that stretch reads GERYLGTVVK…DRGKLSLSPV (73 aa). Residues 727-752 form a disordered region; it reads PVVAEEEGAEGAERAHATEPAEGAEI.

The protein belongs to the polyribonucleotide nucleotidyltransferase family. It depends on Mg(2+) as a cofactor.

The protein localises to the cytoplasm. It carries out the reaction RNA(n+1) + phosphate = RNA(n) + a ribonucleoside 5'-diphosphate. Functionally, involved in mRNA degradation. Catalyzes the phosphorolysis of single-stranded polyribonucleotides processively in the 3'- to 5'-direction. The protein is Polyribonucleotide nucleotidyltransferase of Pseudarthrobacter chlorophenolicus (strain ATCC 700700 / DSM 12829 / CIP 107037 / JCM 12360 / KCTC 9906 / NCIMB 13794 / A6) (Arthrobacter chlorophenolicus).